Consider the following 238-residue polypeptide: MMKQARSLLSRSLCDQSKSLFEASTLRGFASWSNSSTPGRGFPGKDAAKPSGRLFAPYSIFKGKAALSVEPVLPSFTEIDSGNLRIDRRGSLMMTFMPAIGERKYDWEKKQKFALSPTEVGSLISMGSKDSSEFFHDPSMKSSNAGQVRKSLSVKPHADGSGYFISLSVNNSILKTNDYFVVPVTKAEFAVMKTAFSFALPHIMGWNRLTGHVNTEALPSRNVSHLKTEPQLELEWDK.

A mitochondrion-targeting transit peptide spans methionine 1–phenylalanine 29. The required for ssDNA binding stretch occupies residues lysine 62–leucine 67.

It belongs to the Whirly family. Homotetramer.

Its subcellular location is the mitochondrion. Functionally, single-stranded DNA-binding protein that associates with mitochondrial DNA and may play a role in the regulation of the gene expression machinery. Also seems to be required to prevent break-induced DNA rearrangements in the mitochondrial genome. Can bind to melt double-stranded DNA in vivo. The sequence is that of Single-stranded DNA-binding protein WHY2, mitochondrial (WHY2) from Arabidopsis thaliana (Mouse-ear cress).